Consider the following 331-residue polypeptide: DNA-directed RNA polymerase subunit alpha (331 aa).

Positions 1 to 242 (MEKFLRYNIQ…EHYKPIVTEL (242 aa)) are alpha N-terminal domain (alpha-NTD). The segment at 258 to 331 (VSSSKSSLAI…RNLKLKEEQN (74 aa)) is alpha C-terminal domain (alpha-CTD).

Belongs to the RNA polymerase alpha chain family. In terms of assembly, homodimer. The RNAP catalytic core consists of 2 alpha, 1 beta, 1 beta' and 1 omega subunit. When a sigma factor is associated with the core the holoenzyme is formed, which can initiate transcription.

The catalysed reaction is RNA(n) + a ribonucleoside 5'-triphosphate = RNA(n+1) + diphosphate. Its function is as follows. DNA-dependent RNA polymerase catalyzes the transcription of DNA into RNA using the four ribonucleoside triphosphates as substrates. In Malacoplasma penetrans (strain HF-2) (Mycoplasma penetrans), this protein is DNA-directed RNA polymerase subunit alpha.